We begin with the raw amino-acid sequence, 378 residues long: Uroporphyrinogen decarboxylase (378 aa).

Residues 40–44, Asp-90, Tyr-167, Ser-222, and His-355 contribute to the substrate site; that span reads RQAGR.

The protein belongs to the uroporphyrinogen decarboxylase family. In terms of assembly, homodimer.

Its subcellular location is the cytoplasm. It catalyses the reaction uroporphyrinogen III + 4 H(+) = coproporphyrinogen III + 4 CO2. Its pathway is porphyrin-containing compound metabolism; protoporphyrin-IX biosynthesis; coproporphyrinogen-III from 5-aminolevulinate: step 4/4. Functionally, catalyzes the decarboxylation of four acetate groups of uroporphyrinogen-III to yield coproporphyrinogen-III. The protein is Uroporphyrinogen decarboxylase of Psychrobacter arcticus (strain DSM 17307 / VKM B-2377 / 273-4).